The chain runs to 105 residues: Large ribosomal subunit protein uL24 (105 aa).

It belongs to the universal ribosomal protein uL24 family. As to quaternary structure, part of the 50S ribosomal subunit.

Its function is as follows. One of two assembly initiator proteins, it binds directly to the 5'-end of the 23S rRNA, where it nucleates assembly of the 50S subunit. One of the proteins that surrounds the polypeptide exit tunnel on the outside of the subunit. The chain is Large ribosomal subunit protein uL24 from Staphylococcus epidermidis (strain ATCC 35984 / DSM 28319 / BCRC 17069 / CCUG 31568 / BM 3577 / RP62A).